The sequence spans 902 residues: Translation initiation factor IF-2 (902 aa).

Residues asparagine 137–glutamate 177 are compositionally biased toward basic and acidic residues. Disordered regions lie at residues asparagine 137–methionine 248 and histidine 266–threonine 314. Low complexity-rich tracts occupy residues glutamate 178–alanine 229 and arginine 279–serine 291. The tr-type G domain occupies serine 401–lysine 570. The interval glycine 410–threonine 417 is G1. Position 410-417 (glycine 410–threonine 417) interacts with GTP. Residues glycine 435–histidine 439 form a G2 region. The segment at aspartate 456–glycine 459 is G3. GTP is bound by residues aspartate 456 to histidine 460 and asparagine 510 to aspartate 513. The interval asparagine 510–aspartate 513 is G4. The G5 stretch occupies residues serine 546–lysine 548.

The protein belongs to the TRAFAC class translation factor GTPase superfamily. Classic translation factor GTPase family. IF-2 subfamily.

It localises to the cytoplasm. In terms of biological role, one of the essential components for the initiation of protein synthesis. Protects formylmethionyl-tRNA from spontaneous hydrolysis and promotes its binding to the 30S ribosomal subunits. Also involved in the hydrolysis of GTP during the formation of the 70S ribosomal complex. The sequence is that of Translation initiation factor IF-2 from Xanthomonas campestris pv. campestris (strain 8004).